Consider the following 471-residue polypeptide: 1,3-beta-glucanosyltransferase GAS4 (471 aa).

Positions 1 to 21 are cleaved as a signal peptide; that stretch reads MMVFSSTFIFLILELVVLCEA. An intrachain disulfide couples C70 to C99. Y88 contacts (1,3-beta-D-glucosyl)n. A glycan (N-linked (GlcNAc...) asparagine) is linked at N151. Residues N160, E161, D203, and R208 each coordinate (1,3-beta-D-glucosyl)n. The Proton donor role is filled by E161. 2 cysteine pairs are disulfide-bonded: C217-C354 and C238-C269. E266 functions as the Nucleophile in the catalytic mechanism. Position 298 (Y298) interacts with (1,3-beta-D-glucosyl)n. A glycan (N-linked (GlcNAc...) asparagine) is linked at N398. N447 carries GPI-anchor amidated asparagine lipidation. Positions 448 to 471 are cleaved as a propeptide — removed in mature form; it reads SASISGPLLPLGLCLLFFTFSLFF.

This sequence belongs to the glycosyl hydrolase 72 family.

It is found in the cell membrane. In terms of biological role, splits internally a 1,3-beta-glucan molecule and transfers the newly generated reducing end (the donor) to the non-reducing end of another 1,3-beta-glucan molecule (the acceptor) forming a 1,3-beta linkage, resulting in the elongation of 1,3-beta-glucan chains in the cell wall. Involved in spore wall assembly. The chain is 1,3-beta-glucanosyltransferase GAS4 (GAS4) from Saccharomyces cerevisiae (strain ATCC 204508 / S288c) (Baker's yeast).